Reading from the N-terminus, the 130-residue chain is MAQVTYNGTGRRKNSVARVRLVPGTGKITINNKDVVDYVPFANLILDMKQPLTITETTDSYDILVNVNGGGFSGQAGAIRHGISRALLTVDPDFRPALKSAGMLTRDPRMKERKKPGLKKARKASQFSKR.

Residues 99–130 (KSAGMLTRDPRMKERKKPGLKKARKASQFSKR) are disordered. The span at 111 to 130 (KERKKPGLKKARKASQFSKR) shows a compositional bias: basic residues.

This sequence belongs to the universal ribosomal protein uS9 family.

This Latilactobacillus sakei subsp. sakei (strain 23K) (Lactobacillus sakei subsp. sakei) protein is Small ribosomal subunit protein uS9.